The chain runs to 164 residues: Cell division protein SepF (164 aa).

Positions 29–57 (INKGRGASQQEYDEYYEDSTPTVTQKEDP) are disordered.

This sequence belongs to the SepF family. As to quaternary structure, homodimer. Interacts with FtsZ.

It is found in the cytoplasm. Its function is as follows. Cell division protein that is part of the divisome complex and is recruited early to the Z-ring. Probably stimulates Z-ring formation, perhaps through the cross-linking of FtsZ protofilaments. Its function overlaps with FtsA. In Exiguobacterium sibiricum (strain DSM 17290 / CCUG 55495 / CIP 109462 / JCM 13490 / 255-15), this protein is Cell division protein SepF.